A 146-amino-acid polypeptide reads, in one-letter code: Putative actin-depolymerizing factor 8 (146 aa).

Positions 14-144 (PAWIEVPEKS…DLEVLRGRAN (131 aa)) constitute an ADF-H domain.

This sequence belongs to the actin-binding proteins ADF family.

Actin-depolymerizing protein. Severs actin filaments (F-actin) and binds to actin monomers. The protein is Putative actin-depolymerizing factor 8 (ADF8) of Oryza sativa subsp. japonica (Rice).